The following is a 381-amino-acid chain: Lipid-A-disaccharide synthase (381 aa).

It belongs to the LpxB family.

It carries out the reaction a lipid X + a UDP-2-N,3-O-bis[(3R)-3-hydroxyacyl]-alpha-D-glucosamine = a lipid A disaccharide + UDP + H(+). It functions in the pathway bacterial outer membrane biogenesis; LPS lipid A biosynthesis. Functionally, condensation of UDP-2,3-diacylglucosamine and 2,3-diacylglucosamine-1-phosphate to form lipid A disaccharide, a precursor of lipid A, a phosphorylated glycolipid that anchors the lipopolysaccharide to the outer membrane of the cell. In Solibacter usitatus (strain Ellin6076), this protein is Lipid-A-disaccharide synthase.